The sequence spans 232 residues: Ubiquinone biosynthesis O-methyltransferase (232 aa).

Arg36, Gly55, Asp76, and Met120 together coordinate S-adenosyl-L-methionine.

Belongs to the methyltransferase superfamily. UbiG/COQ3 family.

The enzyme catalyses a 3-demethylubiquinol + S-adenosyl-L-methionine = a ubiquinol + S-adenosyl-L-homocysteine + H(+). It catalyses the reaction a 3-(all-trans-polyprenyl)benzene-1,2-diol + S-adenosyl-L-methionine = a 2-methoxy-6-(all-trans-polyprenyl)phenol + S-adenosyl-L-homocysteine + H(+). It functions in the pathway cofactor biosynthesis; ubiquinone biosynthesis. In terms of biological role, O-methyltransferase that catalyzes the 2 O-methylation steps in the ubiquinone biosynthetic pathway. In Burkholderia cenocepacia (strain ATCC BAA-245 / DSM 16553 / LMG 16656 / NCTC 13227 / J2315 / CF5610) (Burkholderia cepacia (strain J2315)), this protein is Ubiquinone biosynthesis O-methyltransferase.